A 65-amino-acid polypeptide reads, in one-letter code: Large ribosomal subunit protein bL33c (65 aa).

The protein belongs to the bacterial ribosomal protein bL33 family.

It is found in the plastid. Its subcellular location is the chloroplast. The chain is Large ribosomal subunit protein bL33c (rpl33) from Marchantia polymorpha (Common liverwort).